A 340-amino-acid polypeptide reads, in one-letter code: tRNA (cytosine(34)-C(5))-methyltransferase, mitochondrial (340 aa).

S-adenosyl-L-methionine is bound by residues 139-145 (CAAPGGK), Glu-162, Asp-193, and Asp-211. The active-site Nucleophile is the Cys-265.

This sequence belongs to the class I-like SAM-binding methyltransferase superfamily. RsmB/NOP family.

The protein localises to the mitochondrion matrix. The enzyme catalyses cytidine(34) in mitochondrial tRNA + S-adenosyl-L-methionine = 5-methylcytidine(34) in mitochondrial tRNA + S-adenosyl-L-homocysteine + H(+). Its function is as follows. Mitochondrial tRNA methyltransferase that mediates methylation of cytosine to 5-methylcytosine (m5C) at position 34 of mt-tRNA(Met). mt-tRNA(Met) methylation at cytosine(34) takes place at the wobble position of the anticodon and initiates the formation of 5-formylcytosine (f(5)c) at this position. mt-tRNA(Met) containing the f(5)c modification at the wobble position enables recognition of the AUA codon in addition to the AUG codon, expanding codon recognition in mitochondrial translation. The protein is tRNA (cytosine(34)-C(5))-methyltransferase, mitochondrial of Homo sapiens (Human).